The primary structure comprises 474 residues: PTS system sucrose-specific EIIBC component (474 aa).

Positions 4–87 constitute a PTS EIIB type-1 domain; the sequence is SQIAQQVIDK…SKLLGIGDMT (84 aa). Catalysis depends on Cys26, which acts as the Phosphocysteine intermediate; for EIIB activity. In terms of domain architecture, PTS EIIC type-1 spans 107–474; the sequence is KGLADIFVPI…LGKRAQLKAE (368 aa). 10 helical membrane passes run 109-129, 158-178, 182-202, 229-249, 264-284, 303-323, 345-365, 376-396, 403-423, and 444-464; these read LADI…LMGI, FINT…GFSA, FGGN…PALS, VGYQ…ATLE, ITPL…IGPI, LGFV…ITGM, FIFP…LGAA, IAVP…MFGV, PFIS…LFNV, and LAMY…LTVI.

It is found in the cell inner membrane. The enzyme catalyses N(pros)-phospho-L-histidyl-[protein](out) + sucrose = sucrose 6(G)-phosphate(in) + L-histidyl-[protein]. Functionally, the phosphoenolpyruvate-dependent sugar phosphotransferase system (sugar PTS), a major carbohydrate active transport system, catalyzes the phosphorylation of incoming sugar substrates concomitantly with their translocation across the cell membrane. This system is involved in sucrose transport. In Pasteurella multocida (strain Pm70), this protein is PTS system sucrose-specific EIIBC component (scrA).